We begin with the raw amino-acid sequence, 273 residues long: Shikimate dehydrogenase (NADP(+)) (273 aa).

Residues 14–16 and Thr61 each bind shikimate; that span reads SKS. The active-site Proton acceptor is Lys65. Positions 86 and 102 each coordinate shikimate. Residues 126 to 130, 150 to 155, and Met213 each bind NADP(+); these read GAGGA and NRTHAR. Residue Tyr215 coordinates shikimate. Position 237 (Gly237) interacts with NADP(+).

The protein belongs to the shikimate dehydrogenase family. In terms of assembly, homodimer.

The catalysed reaction is shikimate + NADP(+) = 3-dehydroshikimate + NADPH + H(+). Its pathway is metabolic intermediate biosynthesis; chorismate biosynthesis; chorismate from D-erythrose 4-phosphate and phosphoenolpyruvate: step 4/7. Functionally, involved in the biosynthesis of the chorismate, which leads to the biosynthesis of aromatic amino acids. Catalyzes the reversible NADPH linked reduction of 3-dehydroshikimate (DHSA) to yield shikimate (SA). This is Shikimate dehydrogenase (NADP(+)) from Aeromonas hydrophila subsp. hydrophila (strain ATCC 7966 / DSM 30187 / BCRC 13018 / CCUG 14551 / JCM 1027 / KCTC 2358 / NCIMB 9240 / NCTC 8049).